The chain runs to 481 residues: Inosine-5'-monophosphate dehydrogenase (481 aa).

CBS domains lie at 92–148 (VIND…SKKV) and 152–209 (MTKM…PEAN). NAD(+) is bound by residues aspartate 244 and 293-295 (GIG). 2 residues coordinate K(+): glycine 295 and glycine 297. Residue serine 298 participates in IMP binding. Cysteine 300 contributes to the K(+) binding site. Residue cysteine 300 is the Thioimidate intermediate of the active site. IMP contacts are provided by residues 333–335 (DGG), 356–357 (GS), and 380–384 (YRGMG). Residue arginine 396 is the Proton acceptor of the active site. Glutamate 410 serves as a coordination point for IMP. Residues glutamate 464, serine 465, and histidine 466 each coordinate K(+).

Belongs to the IMPDH/GMPR family. Homotetramer. It depends on K(+) as a cofactor.

The enzyme catalyses IMP + NAD(+) + H2O = XMP + NADH + H(+). It functions in the pathway purine metabolism; XMP biosynthesis via de novo pathway; XMP from IMP: step 1/1. Its activity is regulated as follows. Mycophenolic acid (MPA) is a non-competitive inhibitor that prevents formation of the closed enzyme conformation by binding to the same site as the amobile flap. In contrast, mizoribine monophosphate (MZP) is a competitive inhibitor that induces the closed conformation. MPA is a potent inhibitor of mammalian IMPDHs but a poor inhibitor of the bacterial enzymes. MZP is a more potent inhibitor of bacterial IMPDH. In terms of biological role, catalyzes the conversion of inosine 5'-phosphate (IMP) to xanthosine 5'-phosphate (XMP), the first committed and rate-limiting step in the de novo synthesis of guanine nucleotides, and therefore plays an important role in the regulation of cell growth. This chain is Inosine-5'-monophosphate dehydrogenase, found in Helicobacter pylori (strain J99 / ATCC 700824) (Campylobacter pylori J99).